Consider the following 989-residue polypeptide: DNA-directed RNA polymerase subunit beta' (989 aa).

Residues Asp-383, Asp-385, and Asp-387 each coordinate Mg(2+).

Belongs to the RNA polymerase beta' chain family. In terms of assembly, the RNAP catalytic core consists of 2 alpha, 1 beta, 1 beta' and 1 omega subunit. When a sigma factor is associated with the core the holoenzyme is formed, which can initiate transcription. Requires Mg(2+) as cofactor.

It carries out the reaction RNA(n) + a ribonucleoside 5'-triphosphate = RNA(n+1) + diphosphate. Functionally, DNA-dependent RNA polymerase catalyzes the transcription of DNA into RNA using the four ribonucleoside triphosphates as substrates. This chain is DNA-directed RNA polymerase subunit beta' (rpoC), found in Leuconostoc pseudomesenteroides.